The following is a 66-amino-acid chain: Light-harvesting protein B-800-850 alpha chain B (66 aa).

Over 1–11 the chain is Cytoplasmic; sequence MNQGRIWTVVN. A helical membrane pass occupies residues 12-35; that stretch reads PGVGLPLLLGSVTVIAILVHYAVL. An a bacteriochlorophyll-binding site is contributed by His31. Topologically, residues 36 to 66 are periplasmic; the sequence is SNTTWFPKYWNGATVAAPAAAPAPAAPAAKK.

This sequence belongs to the antenna complex alpha subunit family. As to quaternary structure, the core complex is formed by different alpha and beta chains, binding bacteriochlorophyll molecules, and arranged most probably in tetrameric structures disposed around the reaction center. The non-pigmented gamma chains may constitute additional components.

The protein localises to the cell inner membrane. Antenna complexes are light-harvesting systems, which transfer the excitation energy to the reaction centers. The protein is Light-harvesting protein B-800-850 alpha chain B (pucAB) of Rhodopseudomonas palustris (strain ATCC BAA-98 / CGA009).